A 118-amino-acid chain; its full sequence is Ribonuclease P protein component (118 aa).

Belongs to the RnpA family. As to quaternary structure, consists of a catalytic RNA component (M1 or rnpB) and a protein subunit.

The enzyme catalyses Endonucleolytic cleavage of RNA, removing 5'-extranucleotides from tRNA precursor.. In terms of biological role, RNaseP catalyzes the removal of the 5'-leader sequence from pre-tRNA to produce the mature 5'-terminus. It can also cleave other RNA substrates such as 4.5S RNA. The protein component plays an auxiliary but essential role in vivo by binding to the 5'-leader sequence and broadening the substrate specificity of the ribozyme. This is Ribonuclease P protein component from Shewanella baltica (strain OS155 / ATCC BAA-1091).